Here is a 483-residue protein sequence, read N- to C-terminus: Protein nucleotidyltransferase YdiU (483 aa).

8 residues coordinate ATP: Gly87, Gly89, Arg90, Lys110, Asp122, Gly123, Arg173, and Arg180. The Proton acceptor role is filled by Asp249. 2 residues coordinate Mg(2+): Asn250 and Asp259. Asp259 is an ATP binding site.

It belongs to the SELO family. Requires Mg(2+) as cofactor. Mn(2+) is required as a cofactor.

It carries out the reaction L-seryl-[protein] + ATP = 3-O-(5'-adenylyl)-L-seryl-[protein] + diphosphate. It catalyses the reaction L-threonyl-[protein] + ATP = 3-O-(5'-adenylyl)-L-threonyl-[protein] + diphosphate. The catalysed reaction is L-tyrosyl-[protein] + ATP = O-(5'-adenylyl)-L-tyrosyl-[protein] + diphosphate. The enzyme catalyses L-histidyl-[protein] + UTP = N(tele)-(5'-uridylyl)-L-histidyl-[protein] + diphosphate. It carries out the reaction L-seryl-[protein] + UTP = O-(5'-uridylyl)-L-seryl-[protein] + diphosphate. It catalyses the reaction L-tyrosyl-[protein] + UTP = O-(5'-uridylyl)-L-tyrosyl-[protein] + diphosphate. In terms of biological role, nucleotidyltransferase involved in the post-translational modification of proteins. It can catalyze the addition of adenosine monophosphate (AMP) or uridine monophosphate (UMP) to a protein, resulting in modifications known as AMPylation and UMPylation. The protein is Protein nucleotidyltransferase YdiU of Yersinia pseudotuberculosis serotype O:1b (strain IP 31758).